Reading from the N-terminus, the 661-residue chain is UvrABC system protein B (661 aa).

Residues 25–182 (AGLSSKKRSQ…NDLINLQYER (158 aa)) enclose the Helicase ATP-binding domain. 38–45 (GITGSGKT) serves as a coordination point for ATP. The Beta-hairpin signature appears at 91–114 (YYDYYQPEAYIARTDTFIEKDSSI). The Helicase C-terminal domain maps to 430 to 592 (QVEDLISEIQ…IIPKTINRAI (163 aa)). The UVR domain occupies 621–656 (KTHIDKLKKEMLKAASNLEFEQAVKLRDQLKTLEEA).

Belongs to the UvrB family. In terms of assembly, forms a heterotetramer with UvrA during the search for lesions. Interacts with UvrC in an incision complex.

The protein resides in the cytoplasm. Functionally, the UvrABC repair system catalyzes the recognition and processing of DNA lesions. A damage recognition complex composed of 2 UvrA and 2 UvrB subunits scans DNA for abnormalities. Upon binding of the UvrA(2)B(2) complex to a putative damaged site, the DNA wraps around one UvrB monomer. DNA wrap is dependent on ATP binding by UvrB and probably causes local melting of the DNA helix, facilitating insertion of UvrB beta-hairpin between the DNA strands. Then UvrB probes one DNA strand for the presence of a lesion. If a lesion is found the UvrA subunits dissociate and the UvrB-DNA preincision complex is formed. This complex is subsequently bound by UvrC and the second UvrB is released. If no lesion is found, the DNA wraps around the other UvrB subunit that will check the other stand for damage. This chain is UvrABC system protein B, found in Rickettsia rickettsii (strain Sheila Smith).